We begin with the raw amino-acid sequence, 238 residues long: Ubiquinone biosynthesis O-methyltransferase (238 aa).

Arg38, Gly57, Asp78, and Leu124 together coordinate S-adenosyl-L-methionine.

The protein belongs to the methyltransferase superfamily. UbiG/COQ3 family.

The enzyme catalyses a 3-demethylubiquinol + S-adenosyl-L-methionine = a ubiquinol + S-adenosyl-L-homocysteine + H(+). It carries out the reaction a 3-(all-trans-polyprenyl)benzene-1,2-diol + S-adenosyl-L-methionine = a 2-methoxy-6-(all-trans-polyprenyl)phenol + S-adenosyl-L-homocysteine + H(+). It functions in the pathway cofactor biosynthesis; ubiquinone biosynthesis. In terms of biological role, O-methyltransferase that catalyzes the 2 O-methylation steps in the ubiquinone biosynthetic pathway. In Marinobacter nauticus (strain ATCC 700491 / DSM 11845 / VT8) (Marinobacter aquaeolei), this protein is Ubiquinone biosynthesis O-methyltransferase.